Here is a 788-residue protein sequence, read N- to C-terminus: Protein translocase subunit SecA 2 (788 aa).

ATP-binding positions include Q86, 104-108, and D493; that span reads GEGKT.

This sequence belongs to the SecA family. Monomer and homodimer. Part of the essential Sec protein translocation apparatus which comprises SecA, SecYEG and auxiliary proteins SecDF. Other proteins may also be involved.

The protein localises to the cell membrane. It localises to the cytoplasm. The catalysed reaction is ATP + H2O + cellular proteinSide 1 = ADP + phosphate + cellular proteinSide 2.. In terms of biological role, part of the Sec protein translocase complex. Interacts with the SecYEG preprotein conducting channel. Has a central role in coupling the hydrolysis of ATP to the transfer of proteins into and across the cell membrane, serving as an ATP-driven molecular motor driving the stepwise translocation of polypeptide chains across the membrane. The protein is Protein translocase subunit SecA 2 of Bacillus thuringiensis (strain Al Hakam).